A 265-amino-acid chain; its full sequence is Mlc titration factor A (265 aa).

Zn(2+) contacts are provided by H111, H148, H152, and E211.

This sequence belongs to the MtfA family. As to quaternary structure, interacts with Mlc. Zn(2+) serves as cofactor.

It localises to the cytoplasm. Functionally, involved in the modulation of the activity of the glucose-phosphotransferase system (glucose-PTS). Interacts with the transcriptional repressor Mlc, preventing its interaction with DNA and leading to the modulation of expression of genes regulated by Mlc, including ptsG, which encodes the PTS system glucose-specific EIICB component. In terms of biological role, shows zinc-dependent metallopeptidase activity. The polypeptide is Mlc titration factor A (Escherichia coli (strain 55989 / EAEC)).